The sequence spans 395 residues: Elongation factor Tu (395 aa).

The region spanning 10 to 204 (KTHANIGTIG…AVDEYIPTPE (195 aa)) is the tr-type G domain. Positions 19–26 (GHVDHGKT) are G1. Residue 19–26 (GHVDHGKT) coordinates GTP. Threonine 26 contacts Mg(2+). The G2 stretch occupies residues 60 to 64 (GITIN). The tract at residues 81–84 (DCPG) is G3. Residues 81 to 85 (DCPGH) and 136 to 139 (NKVD) each bind GTP. The tract at residues 136-139 (NKVD) is G4. The G5 stretch occupies residues 174–176 (SAL).

This sequence belongs to the TRAFAC class translation factor GTPase superfamily. Classic translation factor GTPase family. EF-Tu/EF-1A subfamily. In terms of assembly, monomer.

Its subcellular location is the cytoplasm. It carries out the reaction GTP + H2O = GDP + phosphate + H(+). Its function is as follows. GTP hydrolase that promotes the GTP-dependent binding of aminoacyl-tRNA to the A-site of ribosomes during protein biosynthesis. The sequence is that of Elongation factor Tu from Macrococcus caseolyticus (strain JCSC5402) (Macrococcoides caseolyticum).